The sequence spans 207 residues: Dephospho-CoA kinase (207 aa).

The DPCK domain occupies 5–203 (AVGLTGGVAC…ARYRALASVF (199 aa)). 13 to 18 (ACGKSL) provides a ligand contact to ATP.

This sequence belongs to the CoaE family.

It localises to the cytoplasm. It carries out the reaction 3'-dephospho-CoA + ATP = ADP + CoA + H(+). Its pathway is cofactor biosynthesis; coenzyme A biosynthesis; CoA from (R)-pantothenate: step 5/5. In terms of biological role, catalyzes the phosphorylation of the 3'-hydroxyl group of dephosphocoenzyme A to form coenzyme A. The chain is Dephospho-CoA kinase from Xylella fastidiosa (strain Temecula1 / ATCC 700964).